The sequence spans 578 residues: Probable cytochrome c oxidase subunit 1-alpha (578 aa).

The tract at residues Met-1–Leu-21 is disordered. The chain crosses the membrane as a helical span at residues Ile-44 to Leu-64. His-90 lines the Fe(II)-heme a pocket. Transmembrane regions (helical) follow at residues Ile-93–Leu-113, Leu-125–Leu-145, Leu-174–Ile-194, Val-217–Ala-237, Leu-262–Val-282, and Ile-294–Val-314. Cu cation contacts are provided by His-268 and Tyr-272. Positions His-268–Tyr-272 form a cross-link, 1'-histidyl-3'-tyrosine (His-Tyr). Positions 317 and 318 each coordinate Cu cation. A run of 2 helical transmembrane segments spans residues Met-319–Val-339 and Met-363–Leu-383. His-401 provides a ligand contact to heme a3. Helical transmembrane passes span Phe-402–Trp-422, Ile-437–Gly-457, and Ile-480–Trp-500. His-403 contributes to the Fe(II)-heme a binding site.

It belongs to the heme-copper respiratory oxidase family. Associates with subunits II, III and IV to form cytochrome c oxidase. Requires Cu(2+) as cofactor. Heme serves as cofactor.

Its subcellular location is the cell membrane. It carries out the reaction 4 Fe(II)-[cytochrome c] + O2 + 8 H(+)(in) = 4 Fe(III)-[cytochrome c] + 2 H2O + 4 H(+)(out). It functions in the pathway energy metabolism; oxidative phosphorylation. Its function is as follows. Cytochrome c oxidase is the component of the respiratory chain that catalyzes the reduction of oxygen to water. Subunits 1-3 form the functional core of the enzyme complex. CO I is the catalytic subunit of the enzyme. Electrons originating in cytochrome c are transferred via the copper A center of subunit 2 and heme A of subunit 1 to the bimetallic center formed by heme A3 and copper B. The polypeptide is Probable cytochrome c oxidase subunit 1-alpha (ctaD1) (Streptomyces coelicolor (strain ATCC BAA-471 / A3(2) / M145)).